Here is a 491-residue protein sequence, read N- to C-terminus: Iota-carrageenase (491 aa).

A signal peptide spans 1-23 (MRLYFRKLWLTNLFLGGALASSA). 4 disulfide bridges follow: Cys269-Cys298, Cys336-Cys360, Cys408-Cys476, and Cys412-Cys484.

It belongs to the glycosyl hydrolase 82 family.

It localises to the secreted. The enzyme catalyses Endohydrolysis of 1,4-beta-D-linkages between D-galactose 4-sulfate and 3,6-anhydro-D-galactose-2-sulfate in iota-carrageenans.. Hydrolyzes iota-carrageenans, sulfated 1,3-alpha-1,4-beta galactans from red algal cell walls, with an inversion of anomeric configuration. Also active against hybrid iota-/nu-carrageenan, not active against kappa- or lambda-carrageenans. This chain is Iota-carrageenase, found in Alteromonas macleodii (Pseudoalteromonas macleodii).